Consider the following 372-residue polypeptide: Histidinol-phosphate aminotransferase (372 aa).

Lysine 229 carries the post-translational modification N6-(pyridoxal phosphate)lysine.

This sequence belongs to the class-II pyridoxal-phosphate-dependent aminotransferase family. Histidinol-phosphate aminotransferase subfamily. In terms of assembly, homodimer. Requires pyridoxal 5'-phosphate as cofactor.

The enzyme catalyses L-histidinol phosphate + 2-oxoglutarate = 3-(imidazol-4-yl)-2-oxopropyl phosphate + L-glutamate. The protein operates within amino-acid biosynthesis; L-histidine biosynthesis; L-histidine from 5-phospho-alpha-D-ribose 1-diphosphate: step 7/9. This chain is Histidinol-phosphate aminotransferase, found in Bdellovibrio bacteriovorus (strain ATCC 15356 / DSM 50701 / NCIMB 9529 / HD100).